The following is a 2131-amino-acid chain: Beta/gamma crystallin domain-containing protein 1 (2131 aa).

Disordered regions lie at residues 1–53, 104–370, 385–674, 688–707, and 723–743; these read MPLS…LPAP, KSRA…KGHA, TEGA…PVHK, RTNS…TPAS, and AKEM…NGVL. A compositionally biased stretch (basic residues) spans 19-35; it reads PPKKHTTFHLWRSKKKQ. The segment covering 135 to 147 has biased composition (polar residues); that stretch reads RNGLESPTRSNAK. Composition is skewed to basic and acidic residues over residues 160-169 and 184-194; these read LPERESERSR and GSPRENPREAE. Over residues 248–265 the composition is skewed to polar residues; the sequence is ATTTAKQLHSSPGNSSRQ. Positions 414–424 are enriched in basic residues; it reads SGRRSGRRRGS. Positions 479 to 490 are enriched in low complexity; sequence ASAASPESKPSP. S483 and S489 each carry phosphoserine. 2 stretches are compositionally biased toward basic and acidic residues: residues 536-546 and 562-572; these read PAKESPPKRVP and EAARAIPRELP. Low complexity predominate over residues 609 to 619; the sequence is RAAGAPGASDA. Residues 723–733 are compositionally biased toward basic and acidic residues; that stretch reads AKEMEQPEKKV. Phosphoserine occurs at positions 737 and 756. 2 disordered regions span residues 758 to 791 and 837 to 889; these read EEIL…DVQT and DIPT…KDTC. Residues 769 to 782 show a composition bias toward polar residues; sequence GDSSENQALGPQPN. The segment covering 864-881 has biased composition (low complexity); sequence SPAESSPGPSLSLSAPAP. Phosphoserine is present on S892. Disordered regions lie at residues 926 to 947, 1041 to 1101, 1271 to 1302, and 1316 to 1348; these read LELG…AVGS, QAQS…VFDS, STSQ…EQSN, and SSST…SRSN. T933 is subject to Phosphothreonine. Residues 1055 to 1089 show a composition bias toward polar residues; the sequence is SSPTNSPSSGNHLATPQRPDQTVTNGQDSPASLLN. 3 stretches are compositionally biased toward low complexity: residues 1091 to 1101, 1271 to 1288, and 1316 to 1327; these read SAGSDDSVFDS, STSQ…QPTT, and SSSTSHSSLKSP. The segment covering 1328–1348 has biased composition (basic and acidic residues); it reads SHMEKYPQKEKTKEDLDSRSN. 12 consecutive Beta/gamma crystallin 'Greek key' domains span residues 1430-1469, 1470-1525, 1531-1571, 1572-1614, 1626-1678, 1679-1721, 1727-1769, 1770-1812, 1823-1860, 1861-1904, 1910-1950, and 1951-1992; these read GKVV…KVVR, GCWI…RHVV, SHID…KVHW, GTWL…RPLK, PKVV…KVLR, GIWV…RPIL, AHMI…NVLS, GVWV…QPIC, NQIH…RVSG, GSWV…RFID, PTII…QVIG, and GIWV…RPFV. Residues 1994-2127 enclose the Ricin B-type lectin domain; the sequence is KRIYFRLRNK…EKFTQVWEAM (134 aa).

It belongs to the beta/gamma-crystallin family.

In terms of biological role, may function as suppressor of malignant melanoma. It may exert its effects through interactions with the cytoskeleton. This chain is Beta/gamma crystallin domain-containing protein 1, found in Homo sapiens (Human).